Consider the following 564-residue polypeptide: Arginine--tRNA ligase (564 aa).

Positions 122–132 (PNIAKPFSIGH) match the 'HIGH' region motif.

This sequence belongs to the class-I aminoacyl-tRNA synthetase family. Monomer.

It localises to the cytoplasm. The enzyme catalyses tRNA(Arg) + L-arginine + ATP = L-arginyl-tRNA(Arg) + AMP + diphosphate. The polypeptide is Arginine--tRNA ligase (Lactococcus lactis subsp. cremoris (strain MG1363)).